The chain runs to 522 residues: tRNA-2-methylthio-N(6)-dimethylallyladenosine synthase (522 aa).

Low complexity predominate over residues 1-26; it reads MSLTIPSPASGTSTSATTDTAPAAAP. The interval 1 to 27 is disordered; sequence MSLTIPSPASGTSTSATTDTAPAAAPQ. Residues 28–143 enclose the MTTase N-terminal domain; the sequence is RTYQVRTFGC…LPALLDRARH (116 aa). [4Fe-4S] cluster-binding residues include C37, C72, C106, C180, C184, and C187. The region spanning 166-396 is the Radical SAM core domain; it reads RDSVYSGWVS…TALQDRIAAE (231 aa). The 71-residue stretch at 399-469 folds into the TRAM domain; that stretch reads ARQLGRRVEV…AFHLVADPAS (71 aa). A disordered region spans residues 481–522; the sequence is GDAWDRSQADSCGAPVAGGGAGSNGGKGGVSLGMPALPVRRS. Residues 496–511 are compositionally biased toward gly residues; that stretch reads VAGGGAGSNGGKGGVS.

Belongs to the methylthiotransferase family. MiaB subfamily. Monomer. It depends on [4Fe-4S] cluster as a cofactor.

Its subcellular location is the cytoplasm. The enzyme catalyses N(6)-dimethylallyladenosine(37) in tRNA + (sulfur carrier)-SH + AH2 + 2 S-adenosyl-L-methionine = 2-methylsulfanyl-N(6)-dimethylallyladenosine(37) in tRNA + (sulfur carrier)-H + 5'-deoxyadenosine + L-methionine + A + S-adenosyl-L-homocysteine + 2 H(+). In terms of biological role, catalyzes the methylthiolation of N6-(dimethylallyl)adenosine (i(6)A), leading to the formation of 2-methylthio-N6-(dimethylallyl)adenosine (ms(2)i(6)A) at position 37 in tRNAs that read codons beginning with uridine. The polypeptide is tRNA-2-methylthio-N(6)-dimethylallyladenosine synthase (Arthrobacter sp. (strain FB24)).